We begin with the raw amino-acid sequence, 487 residues long: Catalase (487 aa).

Positions 1–20 are disordered; the sequence is MSQRVLTTESGAPVADNQNS. Catalysis depends on residues His-54 and Asn-127. Tyr-337 serves as a coordination point for heme.

This sequence belongs to the catalase family. The cofactor is heme.

It catalyses the reaction 2 H2O2 = O2 + 2 H2O. Its function is as follows. Decomposes hydrogen peroxide into water and oxygen; serves to protect cells from the toxic effects of hydrogen peroxide. The protein is Catalase (katA) of Streptomyces coelicolor (strain ATCC BAA-471 / A3(2) / M145).